The following is a 329-amino-acid chain: DNA-directed RNA polymerase subunit alpha (329 aa).

The tract at residues 1 to 235 (MQGSVTEFLK…EQLDAFVDLR (235 aa)) is alpha N-terminal domain (alpha-NTD). Residues 249-329 (FDPILLRPVD…NWPPASIAED (81 aa)) form an alpha C-terminal domain (alpha-CTD) region.

This sequence belongs to the RNA polymerase alpha chain family. In terms of assembly, homodimer. The RNAP catalytic core consists of 2 alpha, 1 beta, 1 beta' and 1 omega subunit. When a sigma factor is associated with the core the holoenzyme is formed, which can initiate transcription.

The catalysed reaction is RNA(n) + a ribonucleoside 5'-triphosphate = RNA(n+1) + diphosphate. In terms of biological role, DNA-dependent RNA polymerase catalyzes the transcription of DNA into RNA using the four ribonucleoside triphosphates as substrates. In Histophilus somni (strain 129Pt) (Haemophilus somnus), this protein is DNA-directed RNA polymerase subunit alpha.